The chain runs to 624 residues: Atypical kinase COQ8B, mitochondrial (624 aa).

The tract at residues 90–117 (EMPPDFSSKDGRGETSETPVGAATGTIK) is disordered. A helical transmembrane segment spans residues 189–205 (LANFGGLAVGLGIGAIA). A KxGQ motif motif is present at residues 249–252 (KIGQ). Positions 285 to 517 (MHKVLEEELG…ATVLKKSKDL (233 aa)) constitute a Protein kinase domain. Positions 310–313 (AAAS) match the AAAS motif motif. Residues Ser-313, Lys-331, and 418-421 (MELV) each bind ATP. Asp-461 serves as the catalytic Proton acceptor. Residues Asn-466 and Asp-480 each contribute to the ATP site.

This sequence belongs to the protein kinase superfamily. ADCK protein kinase family. In terms of assembly, homodimer; homodimerizes via its transmembrane region. Interacts with the multi-subunit COQ enzyme complex.

Its subcellular location is the mitochondrion membrane. It is found in the cytoplasm. The protein localises to the cytosol. It localises to the cell membrane. It participates in cofactor biosynthesis; ubiquinone biosynthesis. Functionally, atypical kinase involved in the biosynthesis of coenzyme Q, also named ubiquinone, an essential lipid-soluble electron transporter for aerobic cellular respiration. Its substrate specificity is still unclear: may act as a protein kinase that mediates phosphorylation of COQ3. According to other reports, acts as a small molecule kinase, possibly a lipid kinase that phosphorylates a prenyl lipid in the ubiquinone biosynthesis pathway, as suggested by its ability to bind coenzyme Q lipid intermediates. However, the small molecule kinase activity was not confirmed by another publication. Required for podocyte migration. This Danio rerio (Zebrafish) protein is Atypical kinase COQ8B, mitochondrial.